The sequence spans 161 residues: General odorant-binding protein 2 (161 aa).

Positions 1–20 (MVNRLILMVVVVFITDSVMG) are cleaved as a signal peptide. Cystine bridges form between Cys39-Cys74, Cys70-Cys128, and Cys117-Cys137.

This sequence belongs to the PBP/GOBP family. Homodimer. Olfactory tissue; expressed by the glia-like support cells that ensheathe the sensory neurons and line the base of the sensillum lumen.

Functionally, present in the aqueous fluid surrounding olfactory sensory dendrites and are thought to aid in the capture and transport of hydrophobic odorants into and through this fluid. The polypeptide is General odorant-binding protein 2 (GOBP2) (Manduca sexta (Tobacco hawkmoth)).